The sequence spans 135 residues: Beta-galactoside-binding lectin (135 aa).

Ser2 is modified (N-acetylserine). The cysteines at positions 3 and 8 are disulfide-linked. Residues 5-135 enclose the Galectin domain; that stretch reads GPVCTNLGLK…DFTLRSVSWE (131 aa). Residues 46–50, His54, Asn63, 70–73, and 70–76 each bind a beta-D-galactoside; these read HFNPR, WGTE, and WGTEQRE.

As to quaternary structure, homodimer; disulfide-linked. In terms of assembly, (Microbial infection) Interacts with newcastle disease virus protein HN; this interaction inhibits viral adsorption rather than internalization. Mainly in the intestine (adult), mainly in the skin (embryo).

In terms of biological role, this protein binds beta-galactoside. May participate in host antiviral defense through specific interaction with glycans on the viral envelope glycoproteins. In Gallus gallus (Chicken), this protein is Beta-galactoside-binding lectin (CG-1B).